The primary structure comprises 1502 residues: DNA-directed RNA polymerase subunit beta' (1502 aa).

Cys-60, Cys-62, Cys-75, and Cys-78 together coordinate Zn(2+). The disordered stretch occupies residues 265-293 (RKQRDLEDAEQLTGAERERKEYEASQERE). Over residues 279-293 (AERERKEYEASQERE) the composition is skewed to basic and acidic residues. Mg(2+)-binding residues include Asp-626, Asp-628, and Asp-630. Zn(2+) contacts are provided by Cys-1002, Cys-1075, Cys-1082, and Cys-1085. The tract at residues 1472–1502 (SDDNGDEVGKNGEFADETPFTGDSDDRDNEI) is disordered.

This sequence belongs to the RNA polymerase beta' chain family. As to quaternary structure, the RNAP catalytic core consists of 2 alpha, 1 beta, 1 beta' and 1 omega subunit. When a sigma factor is associated with the core the holoenzyme is formed, which can initiate transcription. Mg(2+) serves as cofactor. Requires Zn(2+) as cofactor.

It carries out the reaction RNA(n) + a ribonucleoside 5'-triphosphate = RNA(n+1) + diphosphate. DNA-dependent RNA polymerase catalyzes the transcription of DNA into RNA using the four ribonucleoside triphosphates as substrates. The polypeptide is DNA-directed RNA polymerase subunit beta' (Roseiflexus castenholzii (strain DSM 13941 / HLO8)).